A 285-amino-acid chain; its full sequence is Hydroxyethylthiazole kinase 1 (285 aa).

Substrate is bound at residue Met-48. Arg-124 and Ser-183 together coordinate ATP. Substrate is bound at residue Gly-210.

Belongs to the Thz kinase family. Mg(2+) serves as cofactor.

The catalysed reaction is 5-(2-hydroxyethyl)-4-methylthiazole + ATP = 4-methyl-5-(2-phosphooxyethyl)-thiazole + ADP + H(+). The protein operates within cofactor biosynthesis; thiamine diphosphate biosynthesis; 4-methyl-5-(2-phosphoethyl)-thiazole from 5-(2-hydroxyethyl)-4-methylthiazole: step 1/1. In terms of biological role, catalyzes the phosphorylation of the hydroxyl group of 4-methyl-5-beta-hydroxyethylthiazole (THZ). The sequence is that of Hydroxyethylthiazole kinase 1 from Methanosphaera stadtmanae (strain ATCC 43021 / DSM 3091 / JCM 11832 / MCB-3).